The primary structure comprises 131 residues: UPF0102 protein YraN (131 aa).

Residues 1 to 19 show a composition bias toward polar residues; sequence MATVPTRSGSPRQLTTKQT. The disordered stretch occupies residues 1-20; that stretch reads MATVPTRSGSPRQLTTKQTG.

Belongs to the UPF0102 family.

The protein is UPF0102 protein YraN of Escherichia coli O157:H7.